The sequence spans 232 residues: Enolase-phosphatase E1 (232 aa).

The protein belongs to the HAD-like hydrolase superfamily. MasA/MtnC family. Monomer. It depends on Mg(2+) as a cofactor.

It carries out the reaction 5-methylsulfanyl-2,3-dioxopentyl phosphate + H2O = 1,2-dihydroxy-5-(methylsulfanyl)pent-1-en-3-one + phosphate. The protein operates within amino-acid biosynthesis; L-methionine biosynthesis via salvage pathway; L-methionine from S-methyl-5-thio-alpha-D-ribose 1-phosphate: step 3/6. It functions in the pathway amino-acid biosynthesis; L-methionine biosynthesis via salvage pathway; L-methionine from S-methyl-5-thio-alpha-D-ribose 1-phosphate: step 4/6. Its function is as follows. Bifunctional enzyme that catalyzes the enolization of 2,3-diketo-5-methylthiopentyl-1-phosphate (DK-MTP-1-P) into the intermediate 2-hydroxy-3-keto-5-methylthiopentenyl-1-phosphate (HK-MTPenyl-1-P), which is then dephosphorylated to form the acireductone 1,2-dihydroxy-3-keto-5-methylthiopentene (DHK-MTPene). In Xylella fastidiosa (strain 9a5c), this protein is Enolase-phosphatase E1.